The following is a 217-amino-acid chain: Homeobox protein Hox-B7 (217 aa).

The Antp-type hexapeptide signature appears at 126–131 (IYPWMR). Positions 137–196 (RKRGRQTYTRYQTLELEKEFHYNRYLTRRRRIEIAHTLCLTERQIKIWFQNRRMKWKKEN) form a DNA-binding region, homeobox. Residues 194–217 (KENKTAGPGTTGQDRAEAEEEEEE) form a disordered region.

The protein belongs to the Antp homeobox family. As to quaternary structure, forms a DNA-binding heterodimer with transcription factor PBX1.

The protein resides in the nucleus. Its function is as follows. Sequence-specific transcription factor which is part of a developmental regulatory system that provides cells with specific positional identities on the anterior-posterior axis. In Homo sapiens (Human), this protein is Homeobox protein Hox-B7 (HOXB7).